The chain runs to 181 residues: Ribosome maturation factor RimM (181 aa).

One can recognise a PRC barrel domain in the interval 98-177; sequence EGEFFYCDLV…KITTHNAKTL (80 aa).

This sequence belongs to the RimM family. In terms of assembly, binds ribosomal protein uS19.

The protein localises to the cytoplasm. Functionally, an accessory protein needed during the final step in the assembly of 30S ribosomal subunit, possibly for assembly of the head region. Essential for efficient processing of 16S rRNA. May be needed both before and after RbfA during the maturation of 16S rRNA. It has affinity for free ribosomal 30S subunits but not for 70S ribosomes. This is Ribosome maturation factor RimM from Helicobacter pylori (strain HPAG1).